We begin with the raw amino-acid sequence, 499 residues long: FAD-dependent oxidoreductase domain-containing protein 1 (499 aa).

The chain crosses the membrane as a helical span at residues 75-95 (ERADVVIVGGGVMGWSIAYWL).

FAD is required as a cofactor.

The protein localises to the mitochondrion inner membrane. Its function is as follows. Required for the assembly of the mitochondrial membrane respiratory chain NADH dehydrogenase (Complex I). Involved in mid-late stages of complex I assembly. The polypeptide is FAD-dependent oxidoreductase domain-containing protein 1 (foxred1) (Xenopus laevis (African clawed frog)).